The chain runs to 610 residues: uncharacterized protein (610 aa).

Residues 1-28 show a composition bias toward polar residues; sequence MDSPSTSESPLKKNTIQDFGESNMTESP. Residues 1–36 are disordered; that stretch reads MDSPSTSESPLKKNTIQDFGESNMTESPQSKEEIDE. Residues 41–82 form an RING-type zinc finger; that stretch reads CSVCKNEIIDTTSLSDCCHEFCYDCIVGWLTKGSGPFCPMCK. Disordered stretches follow at residues 390 to 411 and 431 to 515; these read YRGQ…FRPA and TSSA…SADR. Residues 432–447 show a composition bias toward low complexity; it reads SSAGAGSARSRGSDSV. Acidic residues-rich tracts occupy residues 448–470 and 478–487; these read VEID…EDSD and SEEDSDEEIQ.

This is an uncharacterized protein from Caenorhabditis elegans.